A 313-amino-acid chain; its full sequence is Intracellular endo-alpha-(1-&gt;5)-L-arabinanase (313 aa).

D27 acts as the Proton acceptor in catalysis. Substrate-binding positions include D27, G105, 144–147, and 164–166; these read NAID and SFW. The active-site Proton donor is the E201. H271 serves as a coordination point for Ca(2+).

The protein belongs to the glycosyl hydrolase 43 family. As to quaternary structure, monomer. It depends on Ca(2+) as a cofactor.

The protein localises to the cytoplasm. The catalysed reaction is Endohydrolysis of (1-&gt;5)-alpha-arabinofuranosidic linkages in (1-&gt;5)-arabinans.. It functions in the pathway glycan metabolism; L-arabinan degradation. Its function is as follows. Involved in the degradation of arabinan and is a key enzyme in the complete degradation of the plant cell wall. Catalyzes the cleavage of endo alpha-(1-&gt;5)-L-arabinofuranosyl residues in debranched arabinan. The sequence is that of Intracellular endo-alpha-(1-&gt;5)-L-arabinanase (abn-ts) from Geobacillus thermodenitrificans.